The chain runs to 329 residues: Prostaglandin reductase 1 (329 aa).

A Phosphothreonine modification is found at threonine 18. Position 20 is a phosphoserine (serine 20). Residues 152–155, lysine 178, tyrosine 193, asparagine 217, 239–245, 270–272, and asparagine 321 each bind NADP(+); these read GAVG, CGAISVY, and FIV. The residue at position 178 (lysine 178) is an N6-(2-hydroxyisobutyryl)lysine; alternate. The residue at position 178 (lysine 178) is an N6-acetyllysine; alternate.

The protein belongs to the NADP-dependent oxidoreductase L4BD family. In terms of assembly, monomer or homodimer. Detected in small intestine, kidney, liver, spleen and stomach (at protein level). Detected in small intestine, kidney and liver.

The protein resides in the cytoplasm. It carries out the reaction 13,14-dihydro-15-oxo-prostaglandin E1 + NADP(+) = 15-oxoprostaglandin E1 + NADPH + H(+). The catalysed reaction is 13,14-dihydro-15-oxo-prostaglandin E2 + NAD(+) = 15-oxoprostaglandin E2 + NADH + H(+). It catalyses the reaction 13,14-dihydro-15-oxo-prostaglandin F1alpha + NADP(+) = 15-oxoprostaglandin F1alpha + NADPH + H(+). The enzyme catalyses 13,14-dihydro-15-oxo-PGF2alpha + NADP(+) = 15-oxoprostaglandin F2alpha + NADPH + H(+). It carries out the reaction leukotriene B4 + NADP(+) = 12-oxo-leukotriene B4 + NADPH + H(+). The catalysed reaction is 20-hydroxy-leukotriene B4 + NADP(+) = 12-oxo-20-hydroxy-leukotriene B4 + NADPH + H(+). It catalyses the reaction 6-trans-leukotriene B4 + NADP(+) = 12-oxo-(5S)-hydroxy-(6E,8E,10E,14Z)-eicosatetraenoate + NADPH + H(+). The enzyme catalyses (5S,12S)-dihydroxy-(6E,10E,12E,14Z)-eicosatetraenoate + NADP(+) = 12-oxo-(5S)-hydroxy-(6E,8E,10E,14Z)-eicosatetraenoate + NADPH + H(+). It carries out the reaction an n-alkanal + NADP(+) = an alk-2-enal + NADPH + H(+). The catalysed reaction is hexanal + NADP(+) = (E)-hex-2-enal + NADPH + H(+). It catalyses the reaction octanal + NADP(+) = (2E)-octenal + NADPH + H(+). The enzyme catalyses decanal + NADP(+) = (2E)-decenal + NADPH + H(+). It carries out the reaction dodecanal + NADP(+) = (2E)-dodecenal + NADPH + H(+). The catalysed reaction is 4-hydroxynonanal + NADP(+) = (E)-4-hydroxynon-2-enal + NADPH + H(+). It catalyses the reaction pentan-2-one + NADP(+) = (E)-pent-3-en-2-one + NADPH + H(+). The enzyme catalyses nonan-2-one + NADP(+) = (3E)-nonen-2-one + NADPH + H(+). In terms of biological role, NAD(P)H-dependent oxidoreductase involved in metabolic inactivation of pro- and anti-inflammatory eicosanoids: prostaglandins (PG), leukotrienes (LT) and lipoxins (LX). Catalyzes with high efficiency the reduction of the 13,14 double bond of 15-oxoPGs, including 15-oxo-PGE1, 15-oxo-PGE2, 15-oxo-PGF1-alpha and 15-oxo-PGF2-alpha. Catalyzes with lower efficiency the oxidation of the hydroxyl group at C12 of LTB4 and its derivatives, converting them into biologically less active 12-oxo-LTB4 metabolites. Reduces 15-oxo-LXA4 to 13,14 dihydro-15-oxo-LXA4, enhancing neutrophil recruitment at the inflammatory site. Plays a role in metabolic detoxification of alkenals and ketones. Reduces alpha,beta-unsaturated alkenals and ketones, particularly those with medium-chain length, showing highest affinity toward (2E)-decenal and (3E)-3-nonen-2-one. May inactivate 4-hydroxy-2-nonenal, a cytotoxic lipid constituent of oxidized low-density lipoprotein particles. The chain is Prostaglandin reductase 1 (Ptgr1) from Cavia porcellus (Guinea pig).